Consider the following 441-residue polypeptide: FAM10 family protein At4g22670 (441 aa).

A disordered region spans residues 41-114 (KIPTGVHEED…PQKMGDSSVE (74 aa)). Residues 46–55 (VHEEDKDTKP) show a composition bias toward basic and acidic residues. Acidic residues-rich tracts occupy residues 61–71 (EESDDDMDETE) and 78–102 (EEEEEEDEIVESDVELEGDTVEPDN). Phosphoserine is present on residues Ser-63 and Ser-89. TPR repeat units follow at residues 121–156 (EAAQEAKGKAMEALSEGNFDEAIEHLTRAITLNPTS), 158–190 (IMYGNRASVYIKLKKPNAAIRDANAALEINPDS), and 191–224 (AKGYKSRGMARAMLGEWAEAAKDLHLASTIDYDE). Residues 236–285 (NAHKLEEHRRKYDRLRKEREDKKAERDRLRRRAEAQAAYDKAKKEEQSSS) adopt a coiled-coil conformation. Residues 244 to 282 (RRKYDRLRKEREDKKAERDRLRRRAEAQAAYDKAKKEEQ) show a composition bias toward basic and acidic residues. Residues 244–314 (RRKYDRLRKE…MPGGFPGGMG (71 aa)) form a disordered region. The span at 289–314 (SGGGFPGGMPGGFPGGMPGGFPGGMG) shows a compositional bias: gly residues. In terms of domain architecture, STI1 spans 391-430 (DPELMTAFSDPEVMAALQDVMKNPANLAKHQANPKVAPVI).

It belongs to the FAM10 family.

The polypeptide is FAM10 family protein At4g22670 (Arabidopsis thaliana (Mouse-ear cress)).